A 246-amino-acid polypeptide reads, in one-letter code: DNA repair protein RecO (246 aa).

The protein belongs to the RecO family.

In terms of biological role, involved in DNA repair and RecF pathway recombination. This Methylorubrum extorquens (strain PA1) (Methylobacterium extorquens) protein is DNA repair protein RecO.